We begin with the raw amino-acid sequence, 279 residues long: Large ribosomal subunit protein uL2 (279 aa).

Disordered regions lie at residues 29–59 (PEKSLLRPLHKTGGRNNSGKITTRHKGGGHK) and 224–279 (VAMN…KNKR). Residues 50-59 (TTRHKGGGHK) are compositionally biased toward basic residues. Basic and acidic residues predominate over residues 253 to 268 (PEGRTRRPNKESDKLI). The span at 269 to 279 (VRRRRTGKNKR) shows a compositional bias: basic residues.

It belongs to the universal ribosomal protein uL2 family. In terms of assembly, part of the 50S ribosomal subunit. Forms a bridge to the 30S subunit in the 70S ribosome.

Its function is as follows. One of the primary rRNA binding proteins. Required for association of the 30S and 50S subunits to form the 70S ribosome, for tRNA binding and peptide bond formation. It has been suggested to have peptidyltransferase activity; this is somewhat controversial. Makes several contacts with the 16S rRNA in the 70S ribosome. The sequence is that of Large ribosomal subunit protein uL2 from Paenarthrobacter aurescens (strain TC1).